The sequence spans 955 residues: Leucine--tRNA ligase (955 aa).

A 'HIGH' region motif is present at residues 51–61 (PYLNGVLHAGH). Positions 647 to 651 (KLSKS) match the 'KMSKS' region motif. K650 contacts ATP.

The protein belongs to the class-I aminoacyl-tRNA synthetase family.

It is found in the cytoplasm. It catalyses the reaction tRNA(Leu) + L-leucine + ATP = L-leucyl-tRNA(Leu) + AMP + diphosphate. In Methanococcus maripaludis (strain C5 / ATCC BAA-1333), this protein is Leucine--tRNA ligase.